The chain runs to 369 residues: Carbamoyl phosphate synthase small chain (369 aa).

The tract at residues 1–168 is CPSase; it reads MYGILVLEDG…KKVVKYPAKD (168 aa). L-glutamine contacts are provided by Ser-45, Gly-220, and Gly-222. Positions 172-364 constitute a Glutamine amidotransferase type-1 domain; that stretch reads SCVVIDCGVK…VALGMKFKQE (193 aa). The active-site Nucleophile is the Cys-247. Leu-248, Gln-251, Asn-289, Gly-291, and Phe-292 together coordinate L-glutamine. Active-site residues include His-337 and Glu-339.

It belongs to the CarA family. As to quaternary structure, composed of two chains; the small (or glutamine) chain promotes the hydrolysis of glutamine to ammonia, which is used by the large (or ammonia) chain to synthesize carbamoyl phosphate. Tetramer of heterodimers (alpha,beta)4.

It catalyses the reaction hydrogencarbonate + L-glutamine + 2 ATP + H2O = carbamoyl phosphate + L-glutamate + 2 ADP + phosphate + 2 H(+). The catalysed reaction is L-glutamine + H2O = L-glutamate + NH4(+). It participates in amino-acid biosynthesis; L-arginine biosynthesis; carbamoyl phosphate from bicarbonate: step 1/1. It functions in the pathway pyrimidine metabolism; UMP biosynthesis via de novo pathway; (S)-dihydroorotate from bicarbonate: step 1/3. Its function is as follows. Small subunit of the glutamine-dependent carbamoyl phosphate synthetase (CPSase). CPSase catalyzes the formation of carbamoyl phosphate from the ammonia moiety of glutamine, carbonate, and phosphate donated by ATP, constituting the first step of 2 biosynthetic pathways, one leading to arginine and/or urea and the other to pyrimidine nucleotides. The small subunit (glutamine amidotransferase) binds and cleaves glutamine to supply the large subunit with the substrate ammonia. This is Carbamoyl phosphate synthase small chain from Methanococcus vannielii (strain ATCC 35089 / DSM 1224 / JCM 13029 / OCM 148 / SB).